A 147-amino-acid chain; its full sequence is Probable inactive ribonuclease-like protein 12 (147 aa).

Positions 1–20 are cleaved as a signal peptide; that stretch reads MIIMVIIFLVLLFWENEVND.

It belongs to the pancreatic ribonuclease family.

The protein localises to the secreted. In terms of biological role, does not exhibit any ribonuclease activity. This Homo sapiens (Human) protein is Probable inactive ribonuclease-like protein 12 (RNASE12).